The primary structure comprises 285 residues: Polyamine aminopropyltransferase (285 aa).

The PABS domain maps to 5–241 (DNWYIEHFQP…GWWSVTMASK (237 aa)). Gln-35 contacts S-methyl-5'-thioadenosine. Spermidine contacts are provided by His-66 and Asp-90. Residues Asp-110 and 141-142 (DG) each bind S-methyl-5'-thioadenosine. The active-site Proton acceptor is the Asp-160. 160-163 (DSTD) is a binding site for spermidine. S-methyl-5'-thioadenosine is bound at residue Pro-167.

Belongs to the spermidine/spermine synthase family. In terms of assembly, homodimer or homotetramer.

Its subcellular location is the cytoplasm. The enzyme catalyses S-adenosyl 3-(methylsulfanyl)propylamine + putrescine = S-methyl-5'-thioadenosine + spermidine + H(+). Its pathway is amine and polyamine biosynthesis; spermidine biosynthesis; spermidine from putrescine: step 1/1. Its function is as follows. Catalyzes the irreversible transfer of a propylamine group from the amino donor S-adenosylmethioninamine (decarboxy-AdoMet) to putrescine (1,4-diaminobutane) to yield spermidine. This chain is Polyamine aminopropyltransferase, found in Xanthomonas campestris pv. campestris (strain 8004).